Here is an 874-residue protein sequence, read N- to C-terminus: Alanine--tRNA ligase (874 aa).

Zn(2+) is bound by residues His563, His567, Cys665, and His669.

Belongs to the class-II aminoacyl-tRNA synthetase family. Zn(2+) is required as a cofactor.

It is found in the cytoplasm. The catalysed reaction is tRNA(Ala) + L-alanine + ATP = L-alanyl-tRNA(Ala) + AMP + diphosphate. Functionally, catalyzes the attachment of alanine to tRNA(Ala) in a two-step reaction: alanine is first activated by ATP to form Ala-AMP and then transferred to the acceptor end of tRNA(Ala). Also edits incorrectly charged Ser-tRNA(Ala) and Gly-tRNA(Ala) via its editing domain. The chain is Alanine--tRNA ligase from Actinobacillus succinogenes (strain ATCC 55618 / DSM 22257 / CCUG 43843 / 130Z).